The following is a 147-amino-acid chain: Hemoglobin subunit beta (147 aa).

Val2 carries the post-translational modification N-acetylvaline. A Globin domain is found at 3-147; the sequence is HLTGEEKAAV…VANALAHKYH (145 aa). Phosphothreonine is present on Thr13. Ser45 is modified (phosphoserine). Position 60 is an N6-acetyllysine (Lys60). His64 contacts heme b. Lys83 is subject to N6-acetyllysine. His93 provides a ligand contact to heme b. Cys94 bears the S-nitrosocysteine mark. Lys145 is modified (N6-acetyllysine).

It belongs to the globin family. As to quaternary structure, heterotetramer of two alpha chains and two beta chains. As to expression, red blood cells.

Its function is as follows. Involved in oxygen transport from the lung to the various peripheral tissues. The polypeptide is Hemoglobin subunit beta (HBB) (Lagothrix lagotricha (Brown woolly monkey)).